A 156-amino-acid polypeptide reads, in one-letter code: PKLSQDEIDDLKDVFELFDFWDGRDGAVDAFKLGDVCRCLGINPRNDDVFAVGGTHKMGEKSLPFEEFLPAYEGLMDCEQGTFADYMEAFKTFDREGQGFISGAELRHVLTALGERLTDEEIDEIISLTDLQEDLEGNVKYEDFVKKVMAGPYPDK.

2 EF-hand domains span residues 6–43 and 81–116; these read DEIDDLKDVFELFDFWDGRDGAVDAFKLGDVCRCLGIN and GTFADYMEAFKTFDREGQGFISGAELRHVLTALGER.

Functionally, in molluscan muscle, calcium regulation is associated with myosin rather than with actin. Muscle myosin contains two types of light chains: the catalytic light chain, essential for ATPase activity, and the regulatory light chain, a calcium-binding protein responsible for Ca(2+) dependent binding and Ca(2+) dependent Mg-ATPase activity. This is Myosin, essential light chain, adductor muscle from Mizuhopecten yessoensis (Japanese scallop).